Reading from the N-terminus, the 659-residue chain is tRNA-guanine(15) transglycosylase (659 aa).

D84 serves as the catalytic Nucleophile. Residues D119 and A190 each contribute to the substrate site. C273, C275, and C278 together coordinate Zn(2+). The PUA domain occupies 583 to 658 (KNRVVVNKDS…QAIKTRKGMK (76 aa)).

This sequence belongs to the archaeosine tRNA-ribosyltransferase family. Zn(2+) is required as a cofactor.

The enzyme catalyses guanosine(15) in tRNA + 7-cyano-7-deazaguanine = 7-cyano-7-carbaguanosine(15) in tRNA + guanine. Its pathway is tRNA modification; archaeosine-tRNA biosynthesis. Functionally, exchanges the guanine residue with 7-cyano-7-deazaguanine (preQ0) at position 15 in the dihydrouridine loop (D-loop) of archaeal tRNAs. The chain is tRNA-guanine(15) transglycosylase from Methanobrevibacter smithii (strain ATCC 35061 / DSM 861 / OCM 144 / PS).